The primary structure comprises 154 residues: NADPH-dependent 7-cyano-7-deazaguanine reductase (154 aa).

Residues 1-24 (MPKTDVSGLSQLGTKVDLPQSPEE) are disordered. The active-site Thioimide intermediate is cysteine 52. The active-site Proton donor is the aspartate 59. Residues 74 to 76 (VES) and 93 to 94 (HE) each bind substrate.

This sequence belongs to the GTP cyclohydrolase I family. QueF type 1 subfamily.

The protein resides in the cytoplasm. It carries out the reaction 7-aminomethyl-7-carbaguanine + 2 NADP(+) = 7-cyano-7-deazaguanine + 2 NADPH + 3 H(+). The protein operates within tRNA modification; tRNA-queuosine biosynthesis. Catalyzes the NADPH-dependent reduction of 7-cyano-7-deazaguanine (preQ0) to 7-aminomethyl-7-deazaguanine (preQ1). The polypeptide is NADPH-dependent 7-cyano-7-deazaguanine reductase (Sinorhizobium fredii (strain NBRC 101917 / NGR234)).